We begin with the raw amino-acid sequence, 1123 residues long: Polyprotein of EF-Ts, chloroplastic (1123 aa).

The N-terminal 73 residues, Met1–Ser73, are a transit peptide targeting the chloroplast. The tract at residues Arg68–Val141 is disordered. Positions Thr94 to Ala103 are enriched in acidic residues. Positions Thr106–Ser119 are enriched in low complexity. The S1 motif 1 domain maps to Gly143 to Arg212. The segment at Thr213–Thr258 is disordered. Polar residues predominate over residues Gly231–Arg244. The segment covering Gln245–Ser254 has biased composition (basic and acidic residues). An S1 motif 2 domain is found at Gly263–Lys331. Disordered regions lie at residues Lys443–Thr670 and Val894–Lys923. Polar residues predominate over residues Glu486–Phe501. Residues Ser551–Glu587 show a composition bias toward low complexity. Residues Lys630–Ile639 are compositionally biased toward acidic residues. Low complexity-rich tracts occupy residues Ala657–Thr670 and Val894–Pro903. Over residues Pro908–Lys923 the composition is skewed to basic and acidic residues.

Belongs to the EF-Ts family. Component of the chloroplast ribosome 30S and 70S subunits, as well as polysomes. As to quaternary structure, component of the chloroplast ribosome 70S subunit, and at low levels, present in polysomes. In terms of assembly, associates transiently with chloroplast polysomes.

It is found in the plastid. It localises to the chloroplast. Its function is as follows. Associates with the EF-Tu.GDP complex and induces the exchange of GDP to GTP. It remains bound to the aminoacyl-tRNA.EF-Tu.GTP complex up to the GTP hydrolysis stage on the ribosome. In terms of biological role, binds to psbD and psbA 5'-untranslated regions (UTRs) in vitro. This is Polyprotein of EF-Ts, chloroplastic from Oryza sativa subsp. indica (Rice).